Reading from the N-terminus, the 452-residue chain is Scaffold protein ILK (452 aa).

Methionine 1 carries the N-acetylmethionine modification. ANK repeat units lie at residues 2 to 30 (DDIF…LNQG), 31 to 63 (DDHG…INVM), 64 to 96 (NRGD…INAV), 97 to 129 (NEHG…VSIC), and 130 to 174 (NKYG…GTTR). The interval 33 to 139 (HGFSPLHWAC…NKYGEMPVDK (107 aa)) is interaction with LIMS1. Threonine 173 bears the Phosphothreonine mark. The PH-like; mediates interaction with TGFB1I1 stretch occupies residues 180-212 (GTLNKHSGIDFKQLNFLAKLNENHSGELWKGRW). The residue at position 186 (serine 186) is a Phosphoserine. One can recognise a Protein kinase domain in the interval 193–446 (LNFLAKLNEN…PKFDMIVPIL (254 aa)). Residues asparagine 200, asparagine 202, histidine 203, and serine 204 each contribute to the ATP site. Serine 246 is modified (phosphoserine). 3 residues coordinate ATP: histidine 270, methionine 272, and asparagine 279. Aspartate 339 lines the Mg(2+) pocket. Lysine 341 lines the ATP pocket. The Nuclear localization signal signature appears at 363-371 (KKPEDTNRR). Lysine 426 is subject to N6-acetyllysine.

Belongs to the protein kinase superfamily. TKL Ser/Thr protein kinase family. As to quaternary structure, component of the heterotrimeric IPP (ILK-PINCH-PARVIN) complex composed of ILK, LIMS1/PINCH and PARVA; the complex binds to F-actin via the C-terminal tail of LIMS1 and the N-terminal region of PARVA, promoting F-actin filament bundling. Formation of the IPP complex is dependent on protein kinase C and precedes integrin-mediated cell adhesion and spreading. ILK also interacts with LIMS2/PINCH2 and with PARVB and PARVG which may substitute for LIMS1 and PARVA in the IPP complex; PARVA and PARVB compete for the same binding site. Interaction with PARVG promotes the establishment of cell polarity required for leukocyte migration. Interacts with the cytoplasmic domain of integrin ITGB1 and may also interact with integrins ITGB2, ITGB3 and/or ITGB5. Interacts probably also with TGFB1I1. Interacts (via ANK repeats) with EPHA1 (via SAM domain); stimulated by EFNA1 but independent of the kinase activity of EPHA1. Interacts with FERMT2. Interacts with LIMD2; leading to activate the protein kinase activity. Interacts with PXN/PAXILLIN (via LD motif 4). Interacts with CCDC25 (via cytoplasmic region); initiating the ILK-PARVB cascade to induce cytoskeleton rearrangement and directional migration of cells. Interacts with IQGAP1; the interaction is required for localization of IQGAP1 to the cell cortex. Post-translationally, phosphorylation by PAK1 modulates ILK subcellular location by promoting its nuclear export. In terms of tissue distribution, highly expressed in lung, heart, kidney, liver, brain, spleen and skeletal muscle. Weakly expressed in testis.

It localises to the cell junction. The protein resides in the focal adhesion. Its subcellular location is the cell membrane. The protein localises to the cytoplasm. It is found in the myofibril. It localises to the sarcomere. The protein resides in the cell projection. Its subcellular location is the lamellipodium. The protein localises to the nucleus. It is found in the cytoskeleton. It localises to the microtubule organizing center. The protein resides in the centrosome. Its subcellular location is the cell cortex. Scaffold protein which mediates protein-protein interactions during a range of cellular events including focal adhesion assembly, cell adhesion and cell migration. Regulates integrin-mediated signal transduction by contributing to inside-out integrin activation. Recruits PARVA and LIMS1/PITCH to form the heterotrimeric IPP (ILK-PINCH-PARVIN) complex which binds to F-actin via the C-terminal tail of LIMS1 and the N-terminal region of PARVA, promoting F-actin filament bundling, a process required to generate force for actin cytoskeleton reorganization and subsequent dynamic cell adhesion events such as cell spreading and migration. Binding to PARVA promotes effective assembly of ILK into focal adhesions while PARVA-bound ILK can simultaneously engage integrin-beta cytoplasmic tails to mediate cell adhesion. Plays a role with PARVG in promoting the cell adhesion and spreading of leukocytes. Acts as an upstream effector of both AKT1/PKB and GSK3. Mediates trafficking of caveolae to the cell surface in an ITGB1-dependent manner by promoting the recruitment of IQGAP1 to the cell cortex which cooperates with its effector DIAPH1 to locally stabilize microtubules and allow stable insertion of caveolae into the plasma membrane. Required for the maintenance of mitotic spindle integrity by promoting phosphorylation of TACC3 by AURKA. Associates with chromatin and may act as a negative regulator of transcription when located in the nucleus. The sequence is that of Scaffold protein ILK from Mus musculus (Mouse).